The following is a 142-amino-acid chain: Large ribosomal subunit protein uL13 (142 aa).

The protein belongs to the universal ribosomal protein uL13 family. Part of the 50S ribosomal subunit.

Its function is as follows. This protein is one of the early assembly proteins of the 50S ribosomal subunit, although it is not seen to bind rRNA by itself. It is important during the early stages of 50S assembly. This is Large ribosomal subunit protein uL13 from Bordetella petrii (strain ATCC BAA-461 / DSM 12804 / CCUG 43448).